The following is a 436-amino-acid chain: Deoxyuridine 5'-triphosphate nucleotidohydrolase (436 aa).

Residues 328–330 (RSS) and 431–432 (FG) contribute to the substrate site.

It belongs to the dUTPase family. The cofactor is Mg(2+).

The catalysed reaction is dUTP + H2O = dUMP + diphosphate + H(+). Functionally, involved in nucleotide metabolism: produces dUMP, the immediate precursor of thymidine nucleotides and decreases the intracellular concentration of dUTP to avoid uracil incorporation into viral DNA. This Gallid herpesvirus 2 (strain Chicken/Md5/ATCC VR-987) (GaHV-2) protein is Deoxyuridine 5'-triphosphate nucleotidohydrolase.